Here is a 97-residue protein sequence, read N- to C-terminus: Secreted Ly-6/uPAR domain-containing protein 2 (97 aa).

The first 22 residues, 1–22 (MQLGTGLLLAAVLSLQLAAAEA), serve as a signal peptide directing secretion. Disulfide bonds link Cys-25/Cys-47, Cys-28/Cys-34, Cys-40/Cys-68, Cys-72/Cys-88, and Cys-89/Cys-94. Positions 25-95 (CHQCTGFGGC…IACCQTSLCN (71 aa)) constitute a UPAR/Ly6 domain.

As to quaternary structure, interacts with CHRNA3, CHRNA4, CHRNA5, CHRNA7, CHRNB2 and CHRNB4. Interacts with CHRM1 and CHRM3 probably in an allosteric manner. In terms of tissue distribution, expressed at highest levels in cervix and esophagus, followed by adult and fetal skin. Expressed at lower levels in brain, lung, stomach, small intestine, colon, rectum, uterus, and thymus. Not detected in spleen nor bone marrow. Up-regulated 3-fold in psoriatic lesional skin. In the epidermis, predominantly produced by keratinocytes of the suprabasal epidermal compartment (at protein level). In attached gingiva, produced at highest levels by basal cells located in the lowermost epithelial layers (at protein level). Detected in serum (at protein level).

The protein localises to the secreted. Binds and may modulate the functional properties of nicotinic and muscarinic acetylcholine receptors. May regulate keratinocytes proliferation, differentiation and apoptosis. In vitro moderately inhibits ACh-evoked currents of alpha-3:beta-2-containing nAChRs and strongly these of alpha-4:beta-2-containing nAChRs, modulates alpha-7-containing nAChRs, and inhibits nicotine-induced signaling probably implicating alpha-3:beta-4-containing nAChRs. Proposed to act on alpha-3:beta-2 and alpha-7 nAChRs in an orthosteric, and on mAChRs, such as CHRM1 and CHRM3, in an allosteric manner. The sequence is that of Secreted Ly-6/uPAR domain-containing protein 2 from Homo sapiens (Human).